A 925-amino-acid polypeptide reads, in one-letter code: Colossin-D (925 aa).

The N-terminal stretch at 1–26 (MIKVFKDLKFLILITIILLNLKSINC) is a signal peptide. N-linked (GlcNAc...) asparagine glycosylation is found at Asn47, Asn95, Asn142, Asn166, Asn283, Asn334, Asn344, Asn378, Asn401, Asn511, and Asn642.

Belongs to the serine-aspartate repeat-containing protein (SDr) family.

The protein resides in the secreted. The sequence is that of Colossin-D (colD) from Dictyostelium discoideum (Social amoeba).